Here is a 285-residue protein sequence, read N- to C-terminus: Para-Rep C6 (285 aa).

In terms of domain architecture, CRESS-DNA virus Rep endonuclease spans 3–99 (TRQSTSWVFT…VAGPWEYGLF (97 aa)). The RCR-1 motif lies at 10–13 (VFTL). Positions 36 and 42 each coordinate a divalent metal cation. Positions 42–44 (HLQ) match the RCR-2 motif. Positions 52–74 (RNTTLRQAKYIFNGLNPHLEIAR) match the Nuclear localization signal motif. The active-site For DNA cleavage activity is Y82. An RCR-3 motif is present at residues 82–85 (YAMK). D87 is an a divalent metal cation binding site. Positions 99–105 (FIKRGSH) match the Nuclear localization signal motif. 175–183 (GPAGNEGKS) is an ATP binding site.

The protein belongs to the nanoviridea/circoviridae replication-associated protein family. As to quaternary structure, homooligomer (Potential). Rep binds to repeated DNA motifs (iterons). The cofactor is Mg(2+). Mn(2+) serves as cofactor.

The protein localises to the host nucleus. The enzyme catalyses ATP + H2O = ADP + phosphate + H(+). Its function is as follows. Initiates and terminates the replication only of its own subviral DNA molecule. The closed circular ssDNA genome is first converted to a superhelical dsDNA. Rep binds a specific hairpin at the genome origin of replication. Introduces an endonucleolytic nick within the intergenic region of the genome, thereby initiating the rolling circle replication (RCR). Following cleavage, binds covalently to the 5'-phosphate of DNA as a tyrosyl ester. The cleavage gives rise to a free 3'-OH that serves as a primer for the cellular DNA polymerase. The polymerase synthesizes the (+) strand DNA by rolling circle mechanism. After one round of replication, a Rep-catalyzed nucleotidyl transfer reaction releases a circular single-stranded virus genome, thereby terminating the replication. Displays origin-specific DNA cleavage, nucleotidyl transferase, ATPase and helicase activities. This chain is Para-Rep C6 (C6), found in Subterranean clover stunt C6 alphasatellite (SCSC6A).